The following is a 299-amino-acid chain: Putative glycylpeptide N-tetradecanoyltransferase (299 aa).

This sequence belongs to the NMT family.

It carries out the reaction N-terminal glycyl-[protein] + tetradecanoyl-CoA = N-tetradecanoylglycyl-[protein] + CoA + H(+). In terms of biological role, adds a myristoyl group to the N-terminal glycine residue of certain proteins. The chain is Putative glycylpeptide N-tetradecanoyltransferase from Amsacta moorei entomopoxvirus (AmEPV).